Reading from the N-terminus, the 505-residue chain is Cytochrome P450 71A2 (505 aa).

Residues 7-27 (WYSLLIPLFVFIFLLIHHCFF) traverse the membrane as a helical segment. C448 serves as a coordination point for heme.

It belongs to the cytochrome P450 family. Heme serves as cofactor.

It is found in the membrane. In terms of biological role, may have a role in maturation, such as during flavor formation or other metabolite production specific to aging tissues. This chain is Cytochrome P450 71A2 (CYP71A2), found in Solanum melongena (Eggplant).